The chain runs to 161 residues: Regulator of ribonuclease activity A (161 aa).

The protein belongs to the RraA family. In terms of assembly, homotrimer. Binds to both RNA-binding sites in the C-terminal region of Rne and to RhlB.

The protein localises to the cytoplasm. In terms of biological role, globally modulates RNA abundance by binding to RNase E (Rne) and regulating its endonucleolytic activity. Can modulate Rne action in a substrate-dependent manner by altering the composition of the degradosome. Modulates RNA-binding and helicase activities of the degradosome. This is Regulator of ribonuclease activity A from Escherichia fergusonii (strain ATCC 35469 / DSM 13698 / CCUG 18766 / IAM 14443 / JCM 21226 / LMG 7866 / NBRC 102419 / NCTC 12128 / CDC 0568-73).